We begin with the raw amino-acid sequence, 536 residues long: Testis-specific expressed protein 55 (536 aa).

The segment covering 1 to 11 has biased composition (low complexity); it reads MEEPPQEALAE. 2 disordered regions span residues 1–287 and 328–348; these read MEEP…PGTS and SNADQPPVDNAHYTESDQTDH. Over residues 35 to 52 the composition is skewed to basic and acidic residues; that stretch reads QKNQAERKADNHTAHRIA. Polar residues-rich tracts occupy residues 62 to 85 and 105 to 136; these read QAESSIFSQATNGVAEQNGHSTPG and QVNQTPSEQTKGKASSQANNVQHEQSDGQVSG. Composition is skewed to basic and acidic residues over residues 138–158 and 173–222; these read TEERTAEQTERRLPTQAERRT and RGSR…ERRP. Positions 226–242 are enriched in low complexity; the sequence is IDSGSSVPSDQSPSVQI. Residues 243 to 255 are compositionally biased toward polar residues; the sequence is DSGSSVPSDQRPS. Over residues 339–348 the composition is skewed to basic and acidic residues; it reads HYTESDQTDH.

Testis-specific.

It localises to the nucleus. The protein localises to the cell projection. The protein resides in the cilium. It is found in the flagellum. This chain is Testis-specific expressed protein 55, found in Homo sapiens (Human).